A 518-amino-acid chain; its full sequence is RNA-binding protein FUS (518 aa).

The span at 1–14 (MASNDYTQQATQSY) shows a compositional bias: polar residues. Positions 1-279 (MASNDYTQQA…SEQDNSDNNT (279 aa)) are disordered. Composition is skewed to low complexity over residues 20-63 (QPGQ…GQTQ), 84-105 (SSQS…GQQP), and 116-126 (GSSQSSSYGQP). Over residues 127 to 139 (QSGGYGQQSGYGG) the composition is skewed to gly residues. The segment covering 140–166 (QQQSYGQQQSSYNPPQGYGQQNQYNSS) has biased composition (low complexity). Gly residues-rich tracts occupy residues 167–178 (SGGGGGGGGGNY) and 186–225 (SGGG…GGGY). Arginine 217 and arginine 219 each carry asymmetric dimethylarginine; alternate. Arginine 217 and arginine 219 each carry omega-N-methylarginine; alternate. Arginine 235, arginine 237, arginine 241, arginine 244, and arginine 252 each carry asymmetric dimethylarginine. Over residues 237–252 (RGGGRGGRGGMGGSDR) the composition is skewed to gly residues. Serine 270 carries the phosphoserine modification. The RRM domain occupies 278–364 (NTIFVQGLGE…NPIKVSFATR (87 aa)). Residue threonine 279 is modified to Phosphothreonine. Lysine 327 is covalently cross-linked (Glycyl lysine isopeptide (Lys-Gly) (interchain with G-Cter in SUMO2)). Serine 333 carries the post-translational modification Phosphoserine. 2 disordered regions span residues 368 to 417 (FNRG…QRAG) and 437 to 518 (CNQC…ERPY). Asymmetric dimethylarginine is present on residues arginine 370, arginine 376, arginine 379, arginine 381, and arginine 387. Residues 370 to 414 (RGGGNGRGGRGRGGPMGRGGYGGGGSGGGGRGGFPSGGGGGGGQQ) show a composition bias toward gly residues. Residue arginine 400 is modified to Asymmetric dimethylarginine; alternate. An Omega-N-methylarginine; alternate modification is found at arginine 400. Residues 415–446 (RAGDWKCPNPTCENMNFSWRNECNQCKAPKPD) form a RanBP2-type zinc finger. The segment covering 447-461 (GPGGGPGGSHMGGNY) has biased composition (gly residues). Residues 462–485 (GDDRRGRGGYDRGGYRGRGGDRGG) are compositionally biased toward basic and acidic residues. Residues arginine 466, arginine 468, arginine 473, arginine 477, arginine 479, arginine 483, arginine 487, and arginine 490 each carry the asymmetric dimethylarginine modification. Positions 486–500 (FRGGRGGGDRGGFGP) are enriched in gly residues. Asymmetric dimethylarginine; alternate is present on arginine 495. Arginine 495 is modified (omega-N-methylarginine; alternate). Over residues 503–518 (MDSRGEHRQDRRERPY) the composition is skewed to basic and acidic residues.

The protein belongs to the RRM TET family. Self-oligomerizes (via N-terminal region). Oligomerization is essential for chromatin binding. Component of nuclear riboprotein complexes. Interacts with ILF3, TDRD3 and SF1. Interacts through its C-terminus with SFRS13A. Interacts with OTUB1 and SARNP. Interacts with LRSAM1. Interacts with SAFB1 in a DNA-dependent manner; this interaction tethers FUS to chromatin. Interacts with MATR3. Interacts with SNRNP70 and POLR2A; these interactions couple RNA transcription and splicing. Interacts (through its RNA-binding domain) with RALY (through its RNA-binding domain); both are components of the same RNPs. Post-translationally, phosphorylated in its N-terminal serine residues upon induced DNA damage. ATM and DNA-PK are able to phosphorylate FUS N-terminal region.

The protein resides in the nucleus. Its function is as follows. DNA/RNA-binding protein that plays a role in various cellular processes such as transcription regulation, RNA splicing, RNA transport, DNA repair and damage response. Binds to ssRNA containing the consensus sequence 5'-AGGUAA-3'. Binds to nascent pre-mRNAs and acts as a molecular mediator between RNA polymerase II and U1 small nuclear ribonucleoprotein thereby coupling transcription and splicing. Also binds its own pre-mRNA and autoregulates its expression; this autoregulation mechanism is mediated by non-sense-mediated decay. Plays a role in DNA repair mechanisms by promoting D-loop formation and homologous recombination during DNA double-strand break repair. In neuronal cells, plays crucial roles in dendritic spine formation and stability, RNA transport, mRNA stability and synaptic homeostasis. The polypeptide is RNA-binding protein FUS (Fus) (Mus musculus (Mouse)).